The chain runs to 559 residues: Transcription activator of gluconeogenesis ERT1-2 (559 aa).

A DNA-binding region (zn(2)-C6 fungal-type) is located at residues C23 to C51. Disordered stretches follow at residues D63–Q159, S231–A263, and A329–S349. 2 stretches are compositionally biased toward low complexity: residues Q139 to Q159 and S231 to N244. The span at T245–T260 shows a compositional bias: polar residues. One can recognise a PAS domain in the interval A440–D512.

This sequence belongs to the ERT1/acuK family.

The protein resides in the nucleus. Functionally, transcription factor which regulates nonfermentable carbon utilization. Activator of gluconeogenetic genes. This is Transcription activator of gluconeogenesis ERT1-2 (ERT1-2) from Yarrowia lipolytica (strain CLIB 122 / E 150) (Yeast).